Here is a 284-residue protein sequence, read N- to C-terminus: Bifunctional protein FolD (284 aa).

Residues 165–167 (GRS), serine 190, and valine 231 contribute to the NADP(+) site.

It belongs to the tetrahydrofolate dehydrogenase/cyclohydrolase family. Homodimer.

The enzyme catalyses (6R)-5,10-methylene-5,6,7,8-tetrahydrofolate + NADP(+) = (6R)-5,10-methenyltetrahydrofolate + NADPH. It carries out the reaction (6R)-5,10-methenyltetrahydrofolate + H2O = (6R)-10-formyltetrahydrofolate + H(+). It functions in the pathway one-carbon metabolism; tetrahydrofolate interconversion. In terms of biological role, catalyzes the oxidation of 5,10-methylenetetrahydrofolate to 5,10-methenyltetrahydrofolate and then the hydrolysis of 5,10-methenyltetrahydrofolate to 10-formyltetrahydrofolate. This chain is Bifunctional protein FolD, found in Ruminiclostridium cellulolyticum (strain ATCC 35319 / DSM 5812 / JCM 6584 / H10) (Clostridium cellulolyticum).